The chain runs to 388 residues: Flap endonuclease 1 (388 aa).

An N-domain region spans residues 1 to 105; it reads MGIKNLTSLI…GELAKRYARR (105 aa). Asp34 serves as a coordination point for Mg(2+). Residue Arg71 coordinates DNA. The Mg(2+) site is built by Asp87, Glu159, Glu161, Asp180, and Asp182. Positions 123 to 254 are I-domain; it reads DVQKFQKRTI…KKSFDMITKH (132 aa). Glu159 contacts DNA. DNA is bound by residues Gly232 and Asp234. Position 234 (Asp234) interacts with Mg(2+). Positions 338 to 346 are interaction with PCNA; the sequence is VQTRIDTFF. Residues 349–388 are disordered; the sequence is IKRPRDEDAGSAKKKQKTVAKPGAAGSKKKPAAKKAAGKK. Basic residues predominate over residues 375 to 388; sequence SKKKPAAKKAAGKK.

This sequence belongs to the XPG/RAD2 endonuclease family. FEN1 subfamily. Interacts with PCNA. Three molecules of repG bind to one PCNA trimer with each molecule binding to one PCNA monomer. PCNA stimulates the nuclease activity without altering cleavage specificity. Requires Mg(2+) as cofactor. Post-translationally, phosphorylated. Phosphorylation upon DNA damage induces relocalization to the nuclear plasma.

It localises to the nucleus. The protein localises to the nucleolus. The protein resides in the nucleoplasm. Its subcellular location is the mitochondrion. Its function is as follows. Structure-specific nuclease with 5'-flap endonuclease and 5'-3' exonuclease activities involved in DNA replication and repair. During DNA replication, cleaves the 5'-overhanging flap structure that is generated by displacement synthesis when DNA polymerase encounters the 5'-end of a downstream Okazaki fragment. It enters the flap from the 5'-end and then tracks to cleave the flap base, leaving a nick for ligation. Also involved in the long patch base excision repair (LP-BER) pathway, by cleaving within the apurinic/apyrimidinic (AP) site-terminated flap. Acts as a genome stabilization factor that prevents flaps from equilibrating into structures that lead to duplications and deletions. Also possesses 5'-3' exonuclease activity on nicked or gapped double-stranded DNA, and exhibits RNase H activity. Also involved in replication and repair of rDNA and in repairing mitochondrial DNA. In Heterostelium pallidum (strain ATCC 26659 / Pp 5 / PN500) (Cellular slime mold), this protein is Flap endonuclease 1.